Reading from the N-terminus, the 647-residue chain is Centrosomal protein of 72 kDa (647 aa).

LRR repeat units lie at residues 29 to 50 (ELQS…GHSL), 55 to 76 (GLKS…QYLT), and 77 to 98 (ALES…FRLH). One can recognise an LRRCT domain in the interval 111–150 (NPVVKVEPDYRLFVVHLLPKLQQLDDRPVRASERKASRLH). Composition is skewed to basic and acidic residues over residues 152 to 161 (ASEDSLDSKE) and 220 to 234 (KGRE…ESRH). Disordered regions lie at residues 152–176 (ASED…HHPR), 211–256 (PPGS…RETR), and 285–413 (PEAS…ALPG). Ser-237 bears the Phosphoserine mark. Over residues 366-377 (SLSRQDSSESRN) the composition is skewed to basic and acidic residues. The residue at position 382 (Ser-382) is a Phosphoserine. A compositionally biased stretch (basic and acidic residues) spans 390-402 (EEQRSRGVTDTRE). Ser-404 bears the Phosphoserine mark. A coiled-coil region spans residues 476–620 (SLALESKSLQ…AQHRAEVEQM (145 aa)).

Belongs to the CEP72 family. In terms of assembly, interacts with KIZ, PCM1 and CDK5RAP2.

Its subcellular location is the cytoplasm. It localises to the cytoskeleton. The protein resides in the microtubule organizing center. It is found in the centrosome. The protein localises to the centriolar satellite. Its function is as follows. Involved in the recruitment of key centrosomal proteins to the centrosome. Provides centrosomal microtubule-nucleation activity on the gamma-tubulin ring complexes (gamma-TuRCs) and has critical roles in forming a focused bipolar spindle, which is needed for proper tension generation between sister chromatids. Required for localization of KIZ, AKAP9 and gamma-tubulin ring complexes (gamma-TuRCs). Involved in centriole duplication. Required for CDK5RAP22, CEP152, WDR62 and CEP63 centrosomal localization and promotes the centrosomal localization of CDK2. This Homo sapiens (Human) protein is Centrosomal protein of 72 kDa (CEP72).